Here is a 603-residue protein sequence, read N- to C-terminus: Adenine deaminase 1 (603 aa).

It belongs to the metallo-dependent hydrolases superfamily. Adenine deaminase family. Requires Mn(2+) as cofactor.

It catalyses the reaction adenine + H2O + H(+) = hypoxanthine + NH4(+). The protein is Adenine deaminase 1 of Carboxydothermus hydrogenoformans (strain ATCC BAA-161 / DSM 6008 / Z-2901).